We begin with the raw amino-acid sequence, 485 residues long: Ribulose bisphosphate carboxylase large chain (485 aa).

2 residues coordinate substrate: N124 and T174. The active-site Proton acceptor is K176. Residue K178 coordinates substrate. Residues K202, D204, and E205 each contribute to the Mg(2+) site. K202 carries the post-translational modification N6-carboxylysine. Catalysis depends on H294, which acts as the Proton acceptor. R295, H327, and S379 together coordinate substrate.

It belongs to the RuBisCO large chain family. Type I subfamily. As to quaternary structure, heterohexadecamer of 8 large chains and 8 small chains. It depends on Mg(2+) as a cofactor.

It catalyses the reaction 2 (2R)-3-phosphoglycerate + 2 H(+) = D-ribulose 1,5-bisphosphate + CO2 + H2O. It carries out the reaction D-ribulose 1,5-bisphosphate + O2 = 2-phosphoglycolate + (2R)-3-phosphoglycerate + 2 H(+). In terms of biological role, ruBisCO catalyzes two reactions: the carboxylation of D-ribulose 1,5-bisphosphate, the primary event in carbon dioxide fixation, as well as the oxidative fragmentation of the pentose substrate. Both reactions occur simultaneously and in competition at the same active site. The polypeptide is Ribulose bisphosphate carboxylase large chain (Rhodopseudomonas palustris (strain HaA2)).